A 210-amino-acid chain; its full sequence is MTKYKIDFSKGLVPAILQDNQTKQVLMLGYMNQEAFDKTIEDGVVCFYSRSKQRLWTKGETSGHTQLVKDIHVDCDNDTILIDVIPNGPTCHTGSQSCFNTEVPFSVQTLAQTVQDSAQSNNEKSYTKYLLTEGIEKITKKYGEEAFEVVIEAIKGDKKAFVSEVADELYHLFVLMHALGVDFSEIEAELARRHHKRNNFKGERQNIEQW.

Positions 1-106 are phosphoribosyl-AMP cyclohydrolase; that stretch reads MTKYKIDFSK…SCFNTEVPFS (106 aa). The interval 107 to 210 is phosphoribosyl-ATP pyrophosphohydrolase; it reads VQTLAQTVQD…KGERQNIEQW (104 aa).

This sequence in the N-terminal section; belongs to the PRA-CH family. In the C-terminal section; belongs to the PRA-PH family.

Its subcellular location is the cytoplasm. The enzyme catalyses 1-(5-phospho-beta-D-ribosyl)-ATP + H2O = 1-(5-phospho-beta-D-ribosyl)-5'-AMP + diphosphate + H(+). It catalyses the reaction 1-(5-phospho-beta-D-ribosyl)-5'-AMP + H2O = 1-(5-phospho-beta-D-ribosyl)-5-[(5-phospho-beta-D-ribosylamino)methylideneamino]imidazole-4-carboxamide. It functions in the pathway amino-acid biosynthesis; L-histidine biosynthesis; L-histidine from 5-phospho-alpha-D-ribose 1-diphosphate: step 2/9. The protein operates within amino-acid biosynthesis; L-histidine biosynthesis; L-histidine from 5-phospho-alpha-D-ribose 1-diphosphate: step 3/9. This chain is Histidine biosynthesis bifunctional protein HisIE (hisI), found in Staphylococcus aureus (strain Mu50 / ATCC 700699).